The chain runs to 355 residues: tRNA (guanine-N(1)-)-methyltransferase (355 aa).

Residues glycine 109 and 129–134 (IGDYVL) contribute to the S-adenosyl-L-methionine site.

The protein belongs to the RNA methyltransferase TrmD family. Homodimer.

It localises to the cytoplasm. The enzyme catalyses guanosine(37) in tRNA + S-adenosyl-L-methionine = N(1)-methylguanosine(37) in tRNA + S-adenosyl-L-homocysteine + H(+). Its function is as follows. Specifically methylates guanosine-37 in various tRNAs. The chain is tRNA (guanine-N(1)-)-methyltransferase from Chlamydia abortus (strain DSM 27085 / S26/3) (Chlamydophila abortus).